The following is a 281-amino-acid chain: Pantothenate synthetase (281 aa).

Position 30-37 (methionine 30–histidine 37) interacts with ATP. The active-site Proton donor is the histidine 37. Position 61 (glutamine 61) interacts with (R)-pantoate. Position 61 (glutamine 61) interacts with beta-alanine. An ATP-binding site is contributed by glycine 147–aspartate 150. Residue glutamine 153 coordinates (R)-pantoate. Residues valine 176 and methionine 184 to arginine 187 contribute to the ATP site.

The protein belongs to the pantothenate synthetase family. Homodimer.

The protein resides in the cytoplasm. It carries out the reaction (R)-pantoate + beta-alanine + ATP = (R)-pantothenate + AMP + diphosphate + H(+). The protein operates within cofactor biosynthesis; (R)-pantothenate biosynthesis; (R)-pantothenate from (R)-pantoate and beta-alanine: step 1/1. Catalyzes the condensation of pantoate with beta-alanine in an ATP-dependent reaction via a pantoyl-adenylate intermediate. The chain is Pantothenate synthetase from Acetivibrio thermocellus (strain ATCC 27405 / DSM 1237 / JCM 9322 / NBRC 103400 / NCIMB 10682 / NRRL B-4536 / VPI 7372) (Clostridium thermocellum).